The sequence spans 206 residues: Ras-related protein O-RAL (206 aa).

21 to 28 (GSGGVGKS) contacts GTP. Residues 43–51 (YEPTKADSY) carry the Effector region motif. GTP contacts are provided by residues 68–72 (DTAGQ) and 128–131 (NKSD). The segment covering 180–189 (KMSENKDKNG) has biased composition (basic and acidic residues). The tract at residues 180–206 (KMSENKDKNGKKSSRNKKSLRERCCIL) is disordered. Cysteine 203 is subject to Cysteine methyl ester. The S-geranylgeranyl cysteine moiety is linked to residue cysteine 203. A propeptide spans 204-206 (CIL) (removed in mature form).

This sequence belongs to the small GTPase superfamily. Ras family.

The protein localises to the cell membrane. The catalysed reaction is GTP + H2O = GDP + phosphate + H(+). The polypeptide is Ras-related protein O-RAL (Diplobatis ommata (Ocellated electric ray)).